We begin with the raw amino-acid sequence, 164 residues long: Small ribosomal subunit protein uS9 (164 aa).

This sequence belongs to the universal ribosomal protein uS9 family.

In Rickettsia bellii (strain OSU 85-389), this protein is Small ribosomal subunit protein uS9.